Here is a 120-residue protein sequence, read N- to C-terminus: Large ribosomal subunit protein bL20 (120 aa).

The protein belongs to the bacterial ribosomal protein bL20 family.

Functionally, binds directly to 23S ribosomal RNA and is necessary for the in vitro assembly process of the 50S ribosomal subunit. It is not involved in the protein synthesizing functions of that subunit. In Blochmanniella pennsylvanica (strain BPEN), this protein is Large ribosomal subunit protein bL20.